The sequence spans 144 residues: Large ribosomal subunit protein uL11 (144 aa).

The protein belongs to the universal ribosomal protein uL11 family. In terms of assembly, part of the ribosomal stalk of the 50S ribosomal subunit. Interacts with L10 and the large rRNA to form the base of the stalk. L10 forms an elongated spine to which L12 dimers bind in a sequential fashion forming a multimeric L10(L12)X complex. One or more lysine residues are methylated.

In terms of biological role, forms part of the ribosomal stalk which helps the ribosome interact with GTP-bound translation factors. The protein is Large ribosomal subunit protein uL11 of Corynebacterium glutamicum (strain R).